The chain runs to 277 residues: NADPH-dependent 7-cyano-7-deazaguanine reductase (277 aa).

Residue 83–85 (VES) participates in substrate binding. 85 to 86 (SK) contributes to the NADPH binding site. The active-site Thioimide intermediate is the Cys184. Residue Asp191 is the Proton donor of the active site. Residue 223–224 (HE) coordinates substrate. 252 to 253 (RG) serves as a coordination point for NADPH.

The protein belongs to the GTP cyclohydrolase I family. QueF type 2 subfamily. In terms of assembly, homodimer.

The protein resides in the cytoplasm. It carries out the reaction 7-aminomethyl-7-carbaguanine + 2 NADP(+) = 7-cyano-7-deazaguanine + 2 NADPH + 3 H(+). It functions in the pathway tRNA modification; tRNA-queuosine biosynthesis. Functionally, catalyzes the NADPH-dependent reduction of 7-cyano-7-deazaguanine (preQ0) to 7-aminomethyl-7-deazaguanine (preQ1). The protein is NADPH-dependent 7-cyano-7-deazaguanine reductase of Cupriavidus taiwanensis (strain DSM 17343 / BCRC 17206 / CCUG 44338 / CIP 107171 / LMG 19424 / R1) (Ralstonia taiwanensis (strain LMG 19424)).